Here is a 270-residue protein sequence, read N- to C-terminus: Sulfur carrier protein FdhD (270 aa).

Cysteine 116 functions as the Cysteine persulfide intermediate in the catalytic mechanism. Position 253 to 258 (253 to 258 (FAREGK)) interacts with Mo-bis(molybdopterin guanine dinucleotide).

The protein belongs to the FdhD family.

Its subcellular location is the cytoplasm. Functionally, required for formate dehydrogenase (FDH) activity. Acts as a sulfur carrier protein that transfers sulfur from IscS to the molybdenum cofactor prior to its insertion into FDH. The chain is Sulfur carrier protein FdhD from Haemophilus influenzae (strain ATCC 51907 / DSM 11121 / KW20 / Rd).